The sequence spans 269 residues: 4-hydroxy-tetrahydrodipicolinate reductase (269 aa).

NAD(+) is bound by residues 10–15 and Glu36; that span reads GSSGRM. Arg37 contributes to the NADP(+) binding site. NAD(+)-binding positions include 99–101 and 123–126; these read GTT and APNM. Catalysis depends on His156, which acts as the Proton donor/acceptor. His157 serves as a coordination point for (S)-2,3,4,5-tetrahydrodipicolinate. Lys160 serves as the catalytic Proton donor. 166-167 is a binding site for (S)-2,3,4,5-tetrahydrodipicolinate; the sequence is GT.

This sequence belongs to the DapB family.

Its subcellular location is the cytoplasm. The enzyme catalyses (S)-2,3,4,5-tetrahydrodipicolinate + NAD(+) + H2O = (2S,4S)-4-hydroxy-2,3,4,5-tetrahydrodipicolinate + NADH + H(+). The catalysed reaction is (S)-2,3,4,5-tetrahydrodipicolinate + NADP(+) + H2O = (2S,4S)-4-hydroxy-2,3,4,5-tetrahydrodipicolinate + NADPH + H(+). It functions in the pathway amino-acid biosynthesis; L-lysine biosynthesis via DAP pathway; (S)-tetrahydrodipicolinate from L-aspartate: step 4/4. Functionally, catalyzes the conversion of 4-hydroxy-tetrahydrodipicolinate (HTPA) to tetrahydrodipicolinate. The polypeptide is 4-hydroxy-tetrahydrodipicolinate reductase (Nitrosospira multiformis (strain ATCC 25196 / NCIMB 11849 / C 71)).